A 361-amino-acid polypeptide reads, in one-letter code: Peptide chain release factor 1 (361 aa).

Q237 is subject to N5-methylglutamine. A compositionally biased stretch (basic and acidic residues) spans 286 to 296 (EKRRSAEESTR). Residues 286–305 (EKRRSAEESTRRNLVSSGDR) form a disordered region.

The protein belongs to the prokaryotic/mitochondrial release factor family. In terms of processing, methylated by PrmC. Methylation increases the termination efficiency of RF1.

It is found in the cytoplasm. Peptide chain release factor 1 directs the termination of translation in response to the peptide chain termination codons UAG and UAA. In Shewanella pealeana (strain ATCC 700345 / ANG-SQ1), this protein is Peptide chain release factor 1.